The sequence spans 172 residues: Myosin regulatory light chain RLC-A (172 aa).

The segment covering Met-1–Gln-16 has biased composition (basic residues). Residues Met-1–Ser-20 form a disordered region. Thr-19 carries the phosphothreonine; by MLCK modification. At Ser-20 the chain carries Phosphoserine; by MLCK. 3 consecutive EF-hand domains span residues Ser-29 to Asn-64, Asp-98 to Arg-133, and Phe-134 to Asp-169. Ca(2+) contacts are provided by Asp-42, Asn-44, Asp-46, and Asp-53.

In terms of assembly, myosin is a hexamer of 2 heavy chains and 4 light chains. Phosphorylation increases the actin-activated myosin ATPase activity and thereby regulates the contractile activity.

In terms of biological role, myosin regulatory subunit that plays an important role in regulation of both smooth muscle and nonmuscle cell contractile activity via its phosphorylation. Implicated in cytokinesis, receptor capping, and cell locomotion. The chain is Myosin regulatory light chain RLC-A (Rlc-a) from Rattus norvegicus (Rat).